Consider the following 282-residue polypeptide: Undecaprenyl-diphosphatase (282 aa).

The next 8 helical transmembrane spans lie at 1–21 (MTLI…FLPI), 39–59 (PGAA…MLYF), 85–105 (AKMG…GLLF), 115–135 (SLYW…LAEW), 153–173 (IGWK…IPGS), 193–213 (AARF…AFEL), 229–249 (NLAV…AFLL), and 259–279 (IFIA…GGGT).

Belongs to the UppP family.

It is found in the cell inner membrane. The catalysed reaction is di-trans,octa-cis-undecaprenyl diphosphate + H2O = di-trans,octa-cis-undecaprenyl phosphate + phosphate + H(+). Catalyzes the dephosphorylation of undecaprenyl diphosphate (UPP). Confers resistance to bacitracin. The protein is Undecaprenyl-diphosphatase of Chlorobium luteolum (strain DSM 273 / BCRC 81028 / 2530) (Pelodictyon luteolum).